Reading from the N-terminus, the 187-residue chain is GTP cyclohydrolase 1 (187 aa).

Residues cysteine 76, histidine 79, and cysteine 148 each coordinate Zn(2+).

This sequence belongs to the GTP cyclohydrolase I family. As to quaternary structure, toroid-shaped homodecamer, composed of two pentamers of five dimers.

The enzyme catalyses GTP + H2O = 7,8-dihydroneopterin 3'-triphosphate + formate + H(+). Its pathway is cofactor biosynthesis; 7,8-dihydroneopterin triphosphate biosynthesis; 7,8-dihydroneopterin triphosphate from GTP: step 1/1. This Streptococcus suis (strain 98HAH33) protein is GTP cyclohydrolase 1.